Consider the following 104-residue polypeptide: Thioredoxin 1 (104 aa).

The Thioredoxin domain maps to Val-2–Ala-104. Catalysis depends on nucleophile residues Cys-30 and Cys-33. Cys-30 and Cys-33 are oxidised to a cystine.

It belongs to the thioredoxin family. In terms of processing, the disulfide bond between Cys-30 and Cys-33 acts as a redox-active center and is reduced by thioredoxin reductase TRXR.

Its subcellular location is the cytoplasm. In terms of biological role, participates in various redox reactions through the reversible oxidation of its active center dithiol to a disulfide and catalyzes dithiol-disulfide exchange reactions. By modifying the redox status of targeted proteins, induces changes in their structure and activity. Reduces oxidized glutathione (GSSG), thereby acting as a backup for the glutathione redox system. Reduces nitroglutathione (GSNO), a compound involved in the transport of nitric oxide (NO). Also reduces oxidative stress by detoxifying hydrogen peroxide, tert-butyl hydroperoxide and cumene hydroperoxide. Activates ornithine aminotransferase OAT by reducing a disulfide bond in the substrate binding loop, thereby enhancing the affinity of OAT for its substrates. May reduce S-adenosyl-L-homocysteine hydrolase SAHH. The chain is Thioredoxin 1 from Plasmodium falciparum (isolate 3D7).